Consider the following 324-residue polypeptide: Holliday junction branch migration complex subunit RuvB (324 aa).

The interval 1–168 is large ATPase domain (RuvB-L); it reads MEDLALRPKT…FGIVEHLEYY (168 aa). Residues L6, R7, G48, K51, T52, T53, 115–117, R158, Y168, and R205 each bind ATP; that span reads EDF. T52 contributes to the Mg(2+) binding site. A small ATPAse domain (RuvB-S) region spans residues 169–239; it reads TPEELAQGVM…RALEALAALG (71 aa). Positions 242–324 are head domain (RuvB-H); the sequence is ELGLEKRDRE…PPPVGPLLEP (83 aa). Residues R297 and R302 each coordinate DNA.

It belongs to the RuvB family. As to quaternary structure, homohexamer. Forms an RuvA(8)-RuvB(12)-Holliday junction (HJ) complex. HJ DNA is sandwiched between 2 RuvA tetramers; dsDNA enters through RuvA and exits via RuvB. An RuvB hexamer assembles on each DNA strand where it exits the tetramer. Each RuvB hexamer is contacted by two RuvA subunits (via domain III) on 2 adjacent RuvB subunits; this complex drives branch migration. In the full resolvosome a probable DNA-RuvA(4)-RuvB(12)-RuvC(2) complex forms which resolves the HJ.

Its subcellular location is the cytoplasm. It carries out the reaction ATP + H2O = ADP + phosphate + H(+). With respect to regulation, the ATPase activity of RuvB is enhanced by RuvA. Its function is as follows. The RuvA-RuvB-RuvC complex processes Holliday junction (HJ) DNA during genetic recombination and DNA repair, while the RuvA-RuvB complex plays an important role in the rescue of blocked DNA replication forks via replication fork reversal (RFR). RuvA specifically binds to HJ cruciform DNA, conferring on it an open structure. The RuvB hexamer acts as an ATP-dependent pump, pulling dsDNA into and through the RuvAB complex. RuvB forms 2 homohexamers on either side of HJ DNA bound by 1 or 2 RuvA tetramers; 4 subunits per hexamer contact DNA at a time. Coordinated motions by a converter formed by DNA-disengaged RuvB subunits stimulates ATP hydrolysis and nucleotide exchange. Immobilization of the converter enables RuvB to convert the ATP-contained energy into a lever motion, pulling 2 nucleotides of DNA out of the RuvA tetramer per ATP hydrolyzed, thus driving DNA branch migration. The RuvB motors rotate together with the DNA substrate, which together with the progressing nucleotide cycle form the mechanistic basis for DNA recombination by continuous HJ branch migration. Branch migration allows RuvC to scan DNA until it finds its consensus sequence, where it cleaves and resolves cruciform DNA. In terms of biological role, has Mg(2+)-, DNA-dependent ATPase activity; dsDNA and supercoiled DNA but not ssDNA stimulate activity. Binds to linear dsDNA in the absence of ATP or ATP-gamma-S. This subunit can promote Holliday junction migration alone in vitro. Partially complements an E.coli deletion for UV sensitivity. The polypeptide is Holliday junction branch migration complex subunit RuvB (Thermus thermophilus).